The chain runs to 271 residues: Formamidopyrimidine-DNA glycosylase (271 aa).

Pro2 serves as the catalytic Schiff-base intermediate with DNA. Glu3 serves as the catalytic Proton donor. The active-site Proton donor; for beta-elimination activity is Lys57. Positions 90, 109, and 150 each coordinate DNA. Residues 235-269 form an FPG-type zinc finger; the sequence is LVYGNKDKPCPKCGGKIESLIIGQRNSFFCPKCQK. Arg259 functions as the Proton donor; for delta-elimination activity in the catalytic mechanism.

The protein belongs to the FPG family. Monomer. It depends on Zn(2+) as a cofactor.

The enzyme catalyses Hydrolysis of DNA containing ring-opened 7-methylguanine residues, releasing 2,6-diamino-4-hydroxy-5-(N-methyl)formamidopyrimidine.. It catalyses the reaction 2'-deoxyribonucleotide-(2'-deoxyribose 5'-phosphate)-2'-deoxyribonucleotide-DNA = a 3'-end 2'-deoxyribonucleotide-(2,3-dehydro-2,3-deoxyribose 5'-phosphate)-DNA + a 5'-end 5'-phospho-2'-deoxyribonucleoside-DNA + H(+). Involved in base excision repair of DNA damaged by oxidation or by mutagenic agents. Acts as a DNA glycosylase that recognizes and removes damaged bases. Has a preference for oxidized purines, such as 7,8-dihydro-8-oxoguanine (8-oxoG). Has AP (apurinic/apyrimidinic) lyase activity and introduces nicks in the DNA strand. Cleaves the DNA backbone by beta-delta elimination to generate a single-strand break at the site of the removed base with both 3'- and 5'-phosphates. This is Formamidopyrimidine-DNA glycosylase from Haemophilus influenzae (strain 86-028NP).